The following is a 481-amino-acid chain: Phosphoglucosamine mutase (481 aa).

Serine 128 functions as the Phosphoserine intermediate in the catalytic mechanism. Mg(2+) is bound by residues serine 128, aspartate 269, aspartate 271, and aspartate 273. Residue serine 128 is modified to Phosphoserine.

This sequence belongs to the phosphohexose mutase family. It depends on Mg(2+) as a cofactor. Post-translationally, activated by phosphorylation.

The enzyme catalyses alpha-D-glucosamine 1-phosphate = D-glucosamine 6-phosphate. Catalyzes the conversion of glucosamine-6-phosphate to glucosamine-1-phosphate. The protein is Phosphoglucosamine mutase of Synechocystis sp. (strain ATCC 27184 / PCC 6803 / Kazusa).